Consider the following 762-residue polypeptide: Primary amine oxidase, lung isozyme (762 aa).

A signal peptide spans 1–16 (MFIFIFLSLWTLLVMG). The interval 23–54 (GSEEGVGKQCHPSLPPRCPSRSPSDQPWTHPD) is disordered. Residue Asn136 is glycosylated (N-linked (GlcNAc...) asparagine). Residues Cys197 and Cys198 are joined by a disulfide bond. A glycan (O-linked (GalNAc...) threonine) is linked at Thr211. Asn231 and Asn293 each carry an N-linked (GlcNAc...) asparagine glycan. Position 383–393 (383–393 (YMDACFGMGKF)) interacts with substrate. Asp385 acts as the Proton acceptor in catalysis. Residues Cys403 and Cys429 are joined by a disulfide bond. Substrate is bound at residue 467–472 (LLNYDY). The active-site Schiff-base intermediate with substrate; via topaquinone is the Tyr470. Tyr470 carries the post-translational modification 2',4',5'-topaquinone. Cu cation contacts are provided by His519 and His521. Ca(2+) contacts are provided by Asp528, Leu529, Asp530, and Glu571. Heparin is bound at residue 577–584 (PLGGGSPR). An N-linked (GlcNAc...) asparagine glycan is attached at Asn617. Ca(2+) contacts are provided by Phe662 and Asn664. An N-linked (GlcNAc...) asparagine glycan is attached at Asn665. Ca(2+)-binding residues include Glu666, Asp672, and Leu673. His683 lines the Cu cation pocket. A disulfide bridge links Cys733 with Cys740.

Belongs to the copper/topaquinone oxidase family. Homodimer; disulfide-linked. The cofactor is Cu cation. Requires Ca(2+) as cofactor. L-topaquinone serves as cofactor. Post-translationally, topaquinone (TPQ) is generated by copper-dependent autoxidation of a specific tyrosyl residue. As to expression, expressed in lung, spleen, heart and kidney.

Its subcellular location is the secreted. It localises to the extracellular space. The enzyme catalyses a primary methyl amine + O2 + H2O = an aldehyde + H2O2 + NH4(+). The chain is Primary amine oxidase, lung isozyme from Bos taurus (Bovine).